Reading from the N-terminus, the 95-residue chain is Small ribosomal subunit protein bS20 (95 aa).

Disordered stretches follow at residues M1–K26 and K76–A95. The segment covering A80 to A95 has biased composition (low complexity).

It belongs to the bacterial ribosomal protein bS20 family.

Functionally, binds directly to 16S ribosomal RNA. In Deinococcus geothermalis (strain DSM 11300 / CIP 105573 / AG-3a), this protein is Small ribosomal subunit protein bS20.